The following is a 318-amino-acid chain: Peroxisomal targeting signal 2 receptor (318 aa).

6 WD repeats span residues Asp60–Asp91, Glu104–Asp136, Gly148–Asp179, Ala191–Asp222, Gly235–Asn266, and His279–Asp310.

It belongs to the WD repeat peroxin-7 family. Interacts with PEX5; interaction only takes place when PEX7 is associated with cargo proteins. Interacts with VWA8.

It localises to the cytoplasm. It is found in the cytosol. Its subcellular location is the peroxisome matrix. Its function is as follows. Receptor required for the peroxisomal import of proteins containing a C-terminal PTS2-type peroxisomal targeting signal. Specifically binds to cargo proteins containing a PTS2 peroxisomal targeting signal in the cytosol. Cargo protein-binding triggers interaction with PEX5 and formation of a ternary complex composed of PEX5 and PEX7 along with PTS2-containing cargo proteins, which is tranlocated into peroxisomes by passing through the PEX13-PEX14 docking complex. In Mus musculus (Mouse), this protein is Peroxisomal targeting signal 2 receptor.